Consider the following 498-residue polypeptide: AP2-like ethylene-responsive transcription factor AIL7 (498 aa).

The segment covering 186–195 (TSDQPLSCNN) has biased composition (polar residues). The interval 186–220 (TSDQPLSCNNGERGGNSNKKKTVSKKETSDDSKKK) is disordered. The span at 209-220 (SKKETSDDSKKK) shows a compositional bias: basic and acidic residues. DNA-binding regions (AP2/ERF) lie at residues 231–297 (IYRG…TNFP) and 333–391 (IYRG…TNFE). Residues 422-451 (ESPSSSSSDHNLQQQQLLPSSSPSDQNPNS) are compositionally biased toward low complexity. Residues 422–452 (ESPSSSSSDHNLQQQQLLPSSSPSDQNPNSI) form a disordered region.

The protein belongs to the AP2/ERF transcription factor family. AP2 subfamily. In terms of assembly, interacts with HDG2, and possibly with HDG3, HDG7, ANL2, ATML1 and PDF2. Expressed in roots, seedlings, inflorescence, and siliques. Also detected at low levels in leaves.

It is found in the nucleus. Functionally, probably acts as a transcriptional activator. Binds to the GCC-box pathogenesis-related promoter element. May be involved in the regulation of gene expression by stress factors and by components of stress signal transduction pathways. The sequence is that of AP2-like ethylene-responsive transcription factor AIL7 from Arabidopsis thaliana (Mouse-ear cress).